A 422-amino-acid chain; its full sequence is MKFIDEVNVLVKAGKGGDGIISFRREANVDRGGPDGGNGGRGGNVYFRGDSGLNTLLAFHYQNKISAKDGESGKPKNAYGAAGADEIVKVPLGTLVYYEDNLIADVIEPKDYLIAKGGRGGRGNLMFKSAKNTAPRICENGESGEKFALRLVLKVLADVGLVGKPSAGKSSLLNALSNAKAKTADYDFTTLVPQLGMLKYYDKSCTIADLPGLIAQASEGKGLGFQFLKHIERCKVIAHVIDFGSSLKDPILDYETIKKELKDYNLNLEALPHVIIANKSDQEIFATNLKKFKKAYPTLPIVAISALYQKNLDELKAAIFKMLEQANQQTKSNVVENEIAINITLDRDALKIRKLSENVYEIESKKVLNVVEKIPVSSLDNLWRINNKLKKLGVFELIKKHNVPEGATIKIGNFEFDWSDEE.

In terms of domain architecture, Obg spans 1–156; sequence MKFIDEVNVL…FALRLVLKVL (156 aa). An OBG-type G domain is found at 157 to 324; sequence ADVGLVGKPS…LKAAIFKMLE (168 aa). Residues 163-170, 188-192, 209-212, 278-281, and 305-307 contribute to the GTP site; these read GKPSAGKS, FTTLV, DLPG, NKSD, and SAL. Mg(2+)-binding residues include Ser-170 and Thr-190. One can recognise an OCT domain in the interval 342-420; it reads NITLDRDALK…IGNFEFDWSD (79 aa).

Belongs to the TRAFAC class OBG-HflX-like GTPase superfamily. OBG GTPase family. As to quaternary structure, monomer. Mg(2+) is required as a cofactor.

The protein localises to the cytoplasm. Its function is as follows. An essential GTPase which binds GTP, GDP and possibly (p)ppGpp with moderate affinity, with high nucleotide exchange rates and a fairly low GTP hydrolysis rate. Plays a role in control of the cell cycle, stress response, ribosome biogenesis and in those bacteria that undergo differentiation, in morphogenesis control. This chain is GTPase Obg, found in Metamycoplasma arthritidis (strain 158L3-1) (Mycoplasma arthritidis).